The primary structure comprises 179 residues: MSRIGKLPIPVPNGVEVKIGTDVVEVKGPKGSLSTPVCSLLQYEQADGHVVLTRIEDDRVTRAQHGLRRSLLSNCIDGVTKGFSKALEVIGVGYRVAVKGNIIELQVGYSHPVLVELPEGLKATVEGQVLTISGIDKELVGEMAARIRRIRKPEPYKGKGIKYATETIRRKVGKSGGKK.

It belongs to the universal ribosomal protein uL6 family. As to quaternary structure, part of the 50S ribosomal subunit.

This protein binds to the 23S rRNA, and is important in its secondary structure. It is located near the subunit interface in the base of the L7/L12 stalk, and near the tRNA binding site of the peptidyltransferase center. The chain is Large ribosomal subunit protein uL6 from Desulfovibrio desulfuricans (strain ATCC 27774 / DSM 6949 / MB).